Reading from the N-terminus, the 89-residue chain is MADDAIPHTDVLNSTAQGQLKSIIERVERLEVEKAEIMEQIKEVYAEAKGNGFDVKVLKKVVRIRKQDRAKRQEEDAILDLYLSAIGEI.

The protein belongs to the UPF0335 family.

This is UPF0335 protein CCNA_03428 from Caulobacter vibrioides (strain NA1000 / CB15N) (Caulobacter crescentus).